The sequence spans 186 residues: Ribosome-recycling factor (186 aa).

This sequence belongs to the RRF family.

The protein localises to the cytoplasm. Its function is as follows. Responsible for the release of ribosomes from messenger RNA at the termination of protein biosynthesis. May increase the efficiency of translation by recycling ribosomes from one round of translation to another. The protein is Ribosome-recycling factor of Bartonella quintana (strain Toulouse) (Rochalimaea quintana).